Reading from the N-terminus, the 767-residue chain is U3 small nucleolar RNA-associated protein 14 homolog A (767 aa).

Residues T23–A49 are disordered. Phosphoserine occurs at positions 29, 31, 37, 52, 77, and 81. K122 participates in a covalent cross-link: Glycyl lysine isopeptide (Lys-Gly) (interchain with G-Cter in SUMO2). At T205 the chain carries Phosphothreonine. Residues L317–E346 adopt a coiled-coil conformation. The tract at residues Q338–M554 is disordered. Acidic residues predominate over residues E342–L355. Residues A398–E433 show a composition bias toward basic and acidic residues. A Citrulline modification is found at R431. A Glycyl lysine isopeptide (Lys-Gly) (interchain with G-Cter in SUMO2) cross-link involves residue K447. S451 is modified (phosphoserine). The segment covering V486 to P498 has biased composition (acidic residues). Over residues R503–R538 the composition is skewed to basic and acidic residues. K518 participates in a covalent cross-link: Glycyl lysine isopeptide (Lys-Gly) (interchain with G-Cter in SUMO2). The residue at position 586 (R586) is a Citrulline. The segment at T730–G767 is disordered. Over residues Q753–G767 the composition is skewed to basic residues.

Belongs to the UTP14 family. In terms of assembly, interacts with DHX37. In terms of processing, citrullinated by PADI4. As to expression, ubiquitously expressed.

The protein localises to the nucleus. The protein resides in the nucleolus. In terms of biological role, may be required for ribosome biogenesis. The chain is U3 small nucleolar RNA-associated protein 14 homolog A (Utp14a) from Mus musculus (Mouse).